We begin with the raw amino-acid sequence, 395 residues long: S-adenosylmethionine synthase (395 aa).

Residue histidine 16 participates in ATP binding. Aspartate 18 serves as a coordination point for Mg(2+). Glutamate 44 contacts K(+). L-methionine is bound by residues glutamate 57 and glutamine 100. The interval 100–110 (QSPDIAQGVDR) is flexible loop. ATP is bound by residues 167-169 (DAK), 233-234 (RF), aspartate 242, 248-249 (RK), alanine 265, and lysine 269. L-methionine is bound at residue aspartate 242. Lysine 273 is a binding site for L-methionine.

It belongs to the AdoMet synthase family. Homotetramer; dimer of dimers. The cofactor is Mg(2+). Requires K(+) as cofactor.

It is found in the cytoplasm. It catalyses the reaction L-methionine + ATP + H2O = S-adenosyl-L-methionine + phosphate + diphosphate. It participates in amino-acid biosynthesis; S-adenosyl-L-methionine biosynthesis; S-adenosyl-L-methionine from L-methionine: step 1/1. Functionally, catalyzes the formation of S-adenosylmethionine (AdoMet) from methionine and ATP. The overall synthetic reaction is composed of two sequential steps, AdoMet formation and the subsequent tripolyphosphate hydrolysis which occurs prior to release of AdoMet from the enzyme. This chain is S-adenosylmethionine synthase, found in Burkholderia lata (strain ATCC 17760 / DSM 23089 / LMG 22485 / NCIMB 9086 / R18194 / 383).